Reading from the N-terminus, the 628-residue chain is DNA mismatch repair protein MutL (628 aa).

The tract at residues 350-402 (GLPFDVSESQGNDNHINNGKSRETKSERELYERRPNPFENRLMKESNSPSVGK) is disordered. Polar residues predominate over residues 356–368 (SESQGNDNHINNG). Residues 369–393 (KSRETKSERELYERRPNPFENRLMK) are compositionally biased toward basic and acidic residues.

The protein belongs to the DNA mismatch repair MutL/HexB family.

This protein is involved in the repair of mismatches in DNA. It is required for dam-dependent methyl-directed DNA mismatch repair. May act as a 'molecular matchmaker', a protein that promotes the formation of a stable complex between two or more DNA-binding proteins in an ATP-dependent manner without itself being part of a final effector complex. The sequence is that of DNA mismatch repair protein MutL from Wolbachia sp. subsp. Brugia malayi (strain TRS).